The chain runs to 161 residues: Eukaryotic translation initiation factor 5A-1 (161 aa).

A compositionally biased stretch (basic and acidic residues) spans 1 to 12 (MSDEEHQFESKA). Residues 1-21 (MSDEEHQFESKADAGASKTYP) are disordered. Lys-52 is modified (hypusine).

It belongs to the eIF-5A family. In terms of processing, lys-52 undergoes hypusination, a unique post-translational modification that consists in the addition of a butylamino group from spermidine to lysine side chain, leading to the formation of the unusual amino acid hypusine. eIF-5As are the only known proteins to undergo this modification, which is essential for their function.

Translation factor that promotes translation elongation and termination, particularly upon ribosome stalling at specific amino acid sequence contexts. Binds between the exit (E) and peptidyl (P) site of the ribosome and promotes rescue of stalled ribosome: specifically required for efficient translation of polyproline-containing peptides as well as other motifs that stall the ribosome. Acts as a ribosome quality control (RQC) cofactor by joining the RQC complex to facilitate peptidyl transfer during CAT tailing step. This is Eukaryotic translation initiation factor 5A-1 from Medicago sativa (Alfalfa).